Here is a 477-residue protein sequence, read N- to C-terminus: MYGIKIYNTLTRKIEEFKPVSPGFVKMYVCGPTVYDYNHIGHGRVYVVYDALKRYLALRGYHVLHVMNITDIDDKIINRAHQEKRDWREIAETYTRDYLESLGKLNVKVDLHPRVTEHIKEIIEFIQILIDKGYAYVAPSGSVYFEVDKYPEYGELSGRTNKELWSQEKEFISEKKKPYDFALWKAWKPGEPHWDAPWGKGRPGWHIECSVMSSRYLGRQFDIHGGGTDLIFPHHENERAQSEAAFGVKPWVKYWVHTGMVMMGSEKMSKSLGNIIPLREAFKEWGPETLRLWYLTSHYRRPLVFTEESIRQAQKYYERLVSVTNTIKKLSREAVSLHRMNDEDLKILEKLLEIRSRFHEALSNDFNTPQALAVISEFMTLVFKEIQYNPKYMLVLTAYKLLREFNTVLGVLDKYLVETPEELETLLDNVINIVVDIRRELRERKLYDLADRIRSELGKHGIILMDRGKETTWMRRK.

Cys-30 is a Zn(2+) binding site. The short motif at 32-42 is the 'HIGH' region element; sequence PTVYDYNHIGH. Cys-209, His-234, and Glu-238 together coordinate Zn(2+). The short motif at 267 to 271 is the 'KMSKS' region element; sequence KMSKS. Lys-270 lines the ATP pocket.

It belongs to the class-I aminoacyl-tRNA synthetase family. It depends on Zn(2+) as a cofactor.

The protein resides in the cytoplasm. The enzyme catalyses tRNA(Cys) + L-cysteine + ATP = L-cysteinyl-tRNA(Cys) + AMP + diphosphate. This Staphylothermus marinus (strain ATCC 43588 / DSM 3639 / JCM 9404 / F1) protein is Cysteine--tRNA ligase.